Consider the following 343-residue polypeptide: MSITYKKAGVDIDEADKFVSMISPIVKTTFRKEVLTEIGLFAGLFKFDVKKYKEPVLVSGTDGVGTKLKIAFEADKHDTVGIDLVAMCVNDILTVGAEPLFFLDYFATGKLNAAKATEVIKGIVQGCKEAGCALIGGETAELPRFYKKNEYDLAGFAVGVVDRKEIIDGSSIKEGDVFIGVASSGLHSNGFSLARKVLFDIGKLRIDQYIPELNCILAKELLKPTEIYVKAYFALKDKVKVKGMAHITGGGIPGNLSRILPKNITAILDKNSWTVPSIFHLIKNIGKINEAEMFKVFNMGIGYIFVVEQNEIQKSLAILNKKGYKAYLIGKASKGGEDKITIK.

It belongs to the AIR synthase family.

Its subcellular location is the cytoplasm. The catalysed reaction is 2-formamido-N(1)-(5-O-phospho-beta-D-ribosyl)acetamidine + ATP = 5-amino-1-(5-phospho-beta-D-ribosyl)imidazole + ADP + phosphate + H(+). The protein operates within purine metabolism; IMP biosynthesis via de novo pathway; 5-amino-1-(5-phospho-D-ribosyl)imidazole from N(2)-formyl-N(1)-(5-phospho-D-ribosyl)glycinamide: step 2/2. This chain is Phosphoribosylformylglycinamidine cyclo-ligase, found in Thermodesulfovibrio yellowstonii (strain ATCC 51303 / DSM 11347 / YP87).